The chain runs to 571 residues: Proline--tRNA ligase (571 aa).

Belongs to the class-II aminoacyl-tRNA synthetase family. ProS type 1 subfamily. In terms of assembly, homodimer.

The protein resides in the cytoplasm. It catalyses the reaction tRNA(Pro) + L-proline + ATP = L-prolyl-tRNA(Pro) + AMP + diphosphate. Functionally, catalyzes the attachment of proline to tRNA(Pro) in a two-step reaction: proline is first activated by ATP to form Pro-AMP and then transferred to the acceptor end of tRNA(Pro). As ProRS can inadvertently accommodate and process non-cognate amino acids such as alanine and cysteine, to avoid such errors it has two additional distinct editing activities against alanine. One activity is designated as 'pretransfer' editing and involves the tRNA(Pro)-independent hydrolysis of activated Ala-AMP. The other activity is designated 'posttransfer' editing and involves deacylation of mischarged Ala-tRNA(Pro). The misacylated Cys-tRNA(Pro) is not edited by ProRS. The polypeptide is Proline--tRNA ligase (Buchnera aphidicola subsp. Schizaphis graminum (strain Sg)).